Reading from the N-terminus, the 412-residue chain is Serine hydroxymethyltransferase (412 aa).

(6S)-5,6,7,8-tetrahydrofolate contacts are provided by residues leucine 117 and 121 to 123 (GHL). Lysine 226 carries the post-translational modification N6-(pyridoxal phosphate)lysine. (6S)-5,6,7,8-tetrahydrofolate is bound at residue glutamate 241.

The protein belongs to the SHMT family. As to quaternary structure, homodimer. Pyridoxal 5'-phosphate serves as cofactor.

It is found in the cytoplasm. It catalyses the reaction (6R)-5,10-methylene-5,6,7,8-tetrahydrofolate + glycine + H2O = (6S)-5,6,7,8-tetrahydrofolate + L-serine. It participates in one-carbon metabolism; tetrahydrofolate interconversion. It functions in the pathway amino-acid biosynthesis; glycine biosynthesis; glycine from L-serine: step 1/1. Functionally, catalyzes the reversible interconversion of serine and glycine with tetrahydrofolate (THF) serving as the one-carbon carrier. This reaction serves as the major source of one-carbon groups required for the biosynthesis of purines, thymidylate, methionine, and other important biomolecules. Also exhibits THF-independent aldolase activity toward beta-hydroxyamino acids, producing glycine and aldehydes, via a retro-aldol mechanism. This is Serine hydroxymethyltransferase from Staphylococcus carnosus (strain TM300).